A 401-amino-acid chain; its full sequence is Mu-type opioid receptor (401 aa).

Residues 1 to 69 (MDSSADPRNA…CPPTGSPSMV (69 aa)) lie on the Extracellular side of the membrane. Asn9, Asn12, Asn34, Asn41, and Asn49 each carry an N-linked (GlcNAc...) asparagine glycan. The chain crosses the membrane as a helical span at residues 70-94 (TAITIMALYSIVCVVGLFGNFLVMY). Residues 95 to 107 (VIVRYTKMKTATN) are Cytoplasmic-facing. Residues 108–132 (IYIFNLALADALATSTLPFQSVNYL) traverse the membrane as a helical segment. Residues 133-143 (MGTWPFGTILC) are Extracellular-facing. A disulfide bridge links Cys143 with Cys220. The helical transmembrane segment at 144–166 (KIVISIDYYNMFTSIFTLCTMSV) threads the bilayer. Residues 167-186 (DRYIAVCHPVKALDFRTPRN) are Cytoplasmic-facing. Tyr169 carries the post-translational modification Phosphotyrosine. The chain crosses the membrane as a helical span at residues 187-208 (AKIINVCNWILSSAIGLPVMFM). Over 209 to 231 (ATTKYRNGSIDCALTFSHPTWYW) the chain is Extracellular. The chain crosses the membrane as a helical span at residues 232 to 256 (ENLLKICVFIFAFIMPVLIITVCYG). Residues 257-280 (LMILRLKSVRMLSGSKEKDRNLRR) lie on the Cytoplasmic side of the membrane. Residues 281 to 307 (ITRMVLVVVAVFIVCWTPIHIYVIIKA) form a helical membrane-spanning segment. At 308–315 (LITIPETT) the chain is on the extracellular side. A helical membrane pass occupies residues 316-339 (FQTVSWHFCIALGYTNSCLNPVLY). The NPxxY; plays a role in stabilizing the activated conformation of the receptor signature appears at 335 to 339 (NPVLY). Topologically, residues 340–401 (AFLDENFKRC…NLEAETAPLP (62 aa)) are cytoplasmic. Cys354 carries the S-palmitoyl cysteine lipid modification. Residues 365 to 385 (NSARIRQNTRDHPSTANTVDR) form a disordered region. Phosphoserine is present on Ser366. At Thr373 the chain carries Phosphothreonine. The residue at position 378 (Ser378) is a Phosphoserine. Phosphothreonine is present on Thr397.

Belongs to the G-protein coupled receptor 1 family. In terms of assembly, forms homooligomers and heterooligomers with other GPCRs, such as OPRD1, OPRK1, OPRL1, NPFFR2, ADRA2A, SSTR2, CNR1 and CCR5 (probably in dimeric forms). Interacts with heterotrimeric G proteins; interaction with a heterotrimeric complex containing GNAI1, GNB1 and GNG2 stabilizes the active conformation of the receptor and increases its affinity for endomorphin-2, the synthetic opioid peptide DAMGO and for morphinan agonists. Interacts with PPL; the interaction disrupts agonist-mediated G-protein activation. Interacts (via C-terminus) with DNAJB4 (via C-terminus). Interacts with calmodulin; the interaction inhibits the constitutive activity of OPRM1; it abolishes basal and attenuates agonist-stimulated G-protein coupling. Interacts with FLNA, PLD2, RANBP9 and WLS and GPM6A. Interacts with RTP4. Interacts with SYP and GNAS. Interacts with RGS9, RGS17, RGS20, RGS4, PPP1R9B and HINT1. In terms of processing, phosphorylated. Differentially phosphorylated in basal and agonist-induced conditions. Agonist-mediated phosphorylation modulates receptor internalization. Phosphorylated by GRK2 in a agonist-dependent manner. Phosphorylation at Tyr-169 requires receptor activation, is dependent on non-receptor protein tyrosine kinase Src and results in a decrease in agonist efficacy by reducing G-protein coupling efficiency. Phosphorylated on tyrosine residues; the phosphorylation is involved in agonist-induced G-protein-independent receptor down-regulation. Phosphorylation at Ser-378 is involved in G-protein-dependent but not beta-arrestin-dependent activation of the ERK pathway. Post-translationally, ubiquitinated. A basal ubiquitination seems not to be related to degradation. Ubiquitination is increased upon formation of OPRM1:OPRD1 oligomers leading to proteasomal degradation; the ubiquitination is diminished by RTP4.

It is found in the cell membrane. The protein localises to the cell projection. Its subcellular location is the axon. The protein resides in the perikaryon. It localises to the dendrite. It is found in the endosome. Its function is as follows. Receptor for endogenous opioids such as beta-endorphin and endomorphin. Receptor for natural and synthetic opioids including morphine, heroin, DAMGO, fentanyl, etorphine, buprenorphin and methadone. Also activated by enkephalin peptides, such as Met-enkephalin or Met-enkephalin-Arg-Phe, with higher affinity for Met-enkephalin-Arg-Phe. Agonist binding to the receptor induces coupling to an inactive GDP-bound heterotrimeric G-protein complex and subsequent exchange of GDP for GTP in the G-protein alpha subunit leading to dissociation of the G-protein complex with the free GTP-bound G-protein alpha and the G-protein beta-gamma dimer activating downstream cellular effectors. The agonist- and cell type-specific activity is predominantly coupled to pertussis toxin-sensitive G(i) and G(o) G alpha proteins, GNAI1, GNAI2, GNAI3 and GNAO1, and to a lesser extent to pertussis toxin-insensitive G alpha proteins GNAZ and GNA15. They mediate an array of downstream cellular responses, including inhibition of adenylate cyclase activity and both N-type and L-type calcium channels, activation of inward rectifying potassium channels, mitogen-activated protein kinase (MAPK), phospholipase C (PLC), phosphoinositide/protein kinase (PKC), phosphoinositide 3-kinase (PI3K) and regulation of NF-kappa-B. Also couples to adenylate cyclase stimulatory G alpha proteins. The selective temporal coupling to G-proteins and subsequent signaling can be regulated by RGSZ proteins, such as RGS9, RGS17 and RGS4. Phosphorylation by members of the GPRK subfamily of Ser/Thr protein kinases and association with beta-arrestins is involved in short-term receptor desensitization. Beta-arrestins associate with the GPRK-phosphorylated receptor and uncouple it from the G-protein thus terminating signal transduction. The phosphorylated receptor is internalized through endocytosis via clathrin-coated pits which involves beta-arrestins. The activation of the ERK pathway occurs either in a G-protein-dependent or a beta-arrestin-dependent manner and is regulated by agonist-specific receptor phosphorylation. Acts as a class A G-protein coupled receptor (GPCR) which dissociates from beta-arrestin at or near the plasma membrane and undergoes rapid recycling. Receptor down-regulation pathways are varying with the agonist and occur dependent or independent of G-protein coupling. Endogenous ligands induce rapid desensitization, endocytosis and recycling. Heterooligomerization with other GPCRs can modulate agonist binding, signaling and trafficking properties. Involved in neurogenesis. This chain is Mu-type opioid receptor (OPRM1), found in Sus scrofa (Pig).